The following is a 177-amino-acid chain: Large ribosomal subunit protein uL6 (177 aa).

Residues 152-171 (RPPEPYKGKGVRYDDEEVRR) show a composition bias toward basic and acidic residues. The disordered stretch occupies residues 152-177 (RPPEPYKGKGVRYDDEEVRRKEAKKK).

Belongs to the universal ribosomal protein uL6 family. In terms of assembly, part of the 50S ribosomal subunit.

Its function is as follows. This protein binds to the 23S rRNA, and is important in its secondary structure. It is located near the subunit interface in the base of the L7/L12 stalk, and near the tRNA binding site of the peptidyltransferase center. The protein is Large ribosomal subunit protein uL6 of Shewanella sp. (strain MR-4).